The primary structure comprises 153 residues: Histone H2B.6 (153 aa).

Composition is skewed to basic and acidic residues over residues 1-28 (MAPK…EKAP) and 36-53 (EKRL…EGKK). Residues 1–60 (MAPKAEKKPAAKKPAEEEPAAEKAEKAPAGKKPKAEKRLPAGKGEKGSGEGKKAGRKKGK) are disordered. N6-acetyllysine occurs at positions 7 and 37. Lys-149 is covalently cross-linked (Glycyl lysine isopeptide (Lys-Gly) (interchain with G-Cter in ubiquitin)).

This sequence belongs to the histone H2B family. As to quaternary structure, the nucleosome is a histone octamer containing two molecules each of H2A, H2B, H3 and H4 assembled in one H3-H4 heterotetramer and two H2A-H2B heterodimers. The octamer wraps approximately 147 bp of DNA. In terms of processing, can be acetylated to form H2BK6ac and H2BK33ac. Monoubiquitinated by BRE1 to form H2BK143ub1 and deubiquitinated by UBP26. Required for heterochromatic histone H3 di- and trimethylation at H3K4me. May give a specific tag for epigenetic transcriptional activation.

The protein localises to the nucleus. It localises to the chromosome. Its function is as follows. Core component of nucleosome. Nucleosomes wrap and compact DNA into chromatin, limiting DNA accessibility to the cellular machineries which require DNA as a template. Histones thereby play a central role in transcription regulation, DNA repair, DNA replication and chromosomal stability. DNA accessibility is regulated via a complex set of post-translational modifications of histones, also called histone code, and nucleosome remodeling. In Oryza sativa subsp. indica (Rice), this protein is Histone H2B.6 (H2B.6).